The following is a 359-amino-acid chain: 3-dehydroquinate synthase (359 aa).

NAD(+)-binding positions include 71–76 (DGEAYK), 105–109 (GVIGD), 129–130 (TT), Lys142, and Lys151. Zn(2+)-binding residues include Glu184, His247, and His264.

The protein belongs to the sugar phosphate cyclases superfamily. Dehydroquinate synthase family. Co(2+) serves as cofactor. Requires Zn(2+) as cofactor. The cofactor is NAD(+).

It is found in the cytoplasm. The catalysed reaction is 7-phospho-2-dehydro-3-deoxy-D-arabino-heptonate = 3-dehydroquinate + phosphate. It participates in metabolic intermediate biosynthesis; chorismate biosynthesis; chorismate from D-erythrose 4-phosphate and phosphoenolpyruvate: step 2/7. Its function is as follows. Catalyzes the conversion of 3-deoxy-D-arabino-heptulosonate 7-phosphate (DAHP) to dehydroquinate (DHQ). In Burkholderia multivorans (strain ATCC 17616 / 249), this protein is 3-dehydroquinate synthase.